Reading from the N-terminus, the 216-residue chain is Large ribosomal subunit protein uL3 (216 aa).

The disordered stretch occupies residues 137–157 (GASHGAHKNHRKPGSIGGAST).

This sequence belongs to the universal ribosomal protein uL3 family. Part of the 50S ribosomal subunit. Forms a cluster with proteins L14 and L19.

Its function is as follows. One of the primary rRNA binding proteins, it binds directly near the 3'-end of the 23S rRNA, where it nucleates assembly of the 50S subunit. The polypeptide is Large ribosomal subunit protein uL3 (Paenarthrobacter aurescens (strain TC1)).